The following is a 610-amino-acid chain: Isocitrate dehydrogenase kinase/phosphatase (610 aa).

ATP contacts are provided by residues A359 to T365 and K380. D419 is an active-site residue.

Belongs to the AceK family.

It localises to the cytoplasm. It catalyses the reaction L-seryl-[isocitrate dehydrogenase] + ATP = O-phospho-L-seryl-[isocitrate dehydrogenase] + ADP + H(+). Bifunctional enzyme which can phosphorylate or dephosphorylate isocitrate dehydrogenase (IDH) on a specific serine residue. This is a regulatory mechanism which enables bacteria to bypass the Krebs cycle via the glyoxylate shunt in response to the source of carbon. When bacteria are grown on glucose, IDH is fully active and unphosphorylated, but when grown on acetate or ethanol, the activity of IDH declines drastically concomitant with its phosphorylation. This chain is Isocitrate dehydrogenase kinase/phosphatase, found in Rhodopseudomonas palustris (strain TIE-1).